The sequence spans 681 residues: Serine/threonine-protein kinase PAK 6 (681 aa).

4 disordered regions span residues 1–30, 149–169, 200–256, and 268–355; these read MFRK…DPKE, GGTP…PRVL, QSSP…ESSL, and TAAT…PRTW. The CRIB domain maps to 12–25; that stretch reads ISAPQNFQHRVHTS. The tract at residues 26 to 406 is linker; sequence FDPKEGKFVG…VVDQGDPRLL (381 aa). Low complexity-rich tracts occupy residues 201–212 and 268–278; these read SSPPGASPPTGT and TAATAPPSSSK. Polar residues predominate over residues 308–333; that stretch reads SLPSDQPVGTFSPLTTSDTSSPQKSL. The 252-residue stretch at 407 to 658 folds into the Protein kinase domain; the sequence is LDSYVKIGEG…AQELLDHPFL (252 aa). Residues 413 to 421 and Lys-436 contribute to the ATP site; that span reads IGEGSTGIV. The active-site Proton acceptor is the Asp-526. Ser-560 is modified (phosphoserine; by autocatalysis).

The protein belongs to the protein kinase superfamily. STE Ser/Thr protein kinase family. STE20 subfamily. As to quaternary structure, interacts tightly with GTP-bound but not GDP-bound CDC42/p21 and RAC1. Interacts with the androgen receptor AR and the estrogen receptor ESR1. Interacts with IQGAP1 and PPM1B. In terms of processing, autophosphorylated. Phosphorylated by MAP2K6//MAPKK6, leading to PAK6 activation. In terms of tissue distribution, selectively expressed in brain and testis, with lower levels in multiple tissues including prostate and breast.

It is found in the cytoplasm. It localises to the nucleus. The catalysed reaction is L-seryl-[protein] + ATP = O-phospho-L-seryl-[protein] + ADP + H(+). The enzyme catalyses L-threonyl-[protein] + ATP = O-phospho-L-threonyl-[protein] + ADP + H(+). Its function is as follows. Serine/threonine protein kinase that plays a role in the regulation of gene transcription. The kinase activity is induced by various effectors including AR or MAP2K6/MAPKK6. Phosphorylates the DNA-binding domain of androgen receptor/AR and thereby inhibits AR-mediated transcription. Also inhibits ESR1-mediated transcription. May play a role in cytoskeleton regulation by interacting with IQGAP1. May protect cells from apoptosis through phosphorylation of BAD. This Homo sapiens (Human) protein is Serine/threonine-protein kinase PAK 6 (PAK6).